Reading from the N-terminus, the 657-residue chain is Folic acid synthesis protein FOL1 (657 aa).

Positions 1-116 (MDKIIIKDLL…WPGVQIERTL (116 aa)) are DHNA. The tract at residues 149-274 (YLAFGSNLGD…FVLLPLSDIA (126 aa)) is HPPK. One can recognise a Pterin-binding domain in the interval 333 to 641 (TFIMGILNVT…DIPEIRDAML (309 aa)). Residues 335-657 (IMGILNVTPD…KPQRRYQIQK (323 aa)) are DHPS. Asn340 contacts Mg(2+). The (7,8-dihydropterin-6-yl)methyl diphosphate site is built by Thr380, Asp416, and Asn435. The segment at 466 to 524 (LNNSNDSNSNSSINTNGEDNNNNNNNNNNNNNNNNNNNNNNNNNDDNDNDNRSKIKQKI) is disordered. The segment covering 467-509 (NNSNDSNSNSSINTNGEDNNNNNNNNNNNNNNNNNNNNNNNNN) has biased composition (low complexity). Positions 514–524 (NDNRSKIKQKI) are enriched in basic and acidic residues. Residues Asp547, Lys583, and 629-631 (RIH) each bind (7,8-dihydropterin-6-yl)methyl diphosphate.

In the N-terminal section; belongs to the DHNA family. The protein in the central section; belongs to the HPPK family. This sequence in the C-terminal section; belongs to the DHPS family. Mg(2+) is required as a cofactor.

It carries out the reaction 7,8-dihydroneopterin = 6-hydroxymethyl-7,8-dihydropterin + glycolaldehyde. The enzyme catalyses 6-hydroxymethyl-7,8-dihydropterin + ATP = (7,8-dihydropterin-6-yl)methyl diphosphate + AMP + H(+). It catalyses the reaction (7,8-dihydropterin-6-yl)methyl diphosphate + 4-aminobenzoate = 7,8-dihydropteroate + diphosphate. Its pathway is cofactor biosynthesis; tetrahydrofolate biosynthesis; 2-amino-4-hydroxy-6-hydroxymethyl-7,8-dihydropteridine diphosphate from 7,8-dihydroneopterin triphosphate: step 3/4. It participates in cofactor biosynthesis; tetrahydrofolate biosynthesis; 2-amino-4-hydroxy-6-hydroxymethyl-7,8-dihydropteridine diphosphate from 7,8-dihydroneopterin triphosphate: step 4/4. It functions in the pathway cofactor biosynthesis; tetrahydrofolate biosynthesis; 7,8-dihydrofolate from 2-amino-4-hydroxy-6-hydroxymethyl-7,8-dihydropteridine diphosphate and 4-aminobenzoate: step 1/2. Catalyzes three sequential steps of tetrahydrofolate biosynthesis. The polypeptide is Folic acid synthesis protein FOL1 (fol1) (Dictyostelium discoideum (Social amoeba)).